The chain runs to 187 residues: Photosystem I assembly protein Ycf4 (187 aa).

2 helical membrane passes run 21–43 and 69–91; these read LSNYWWAITIGLGSSGFILAGIS and LLYGTIGFLLDIYLWLLILWNVG.

Belongs to the Ycf4 family.

The protein resides in the plastid. The protein localises to the cyanelle thylakoid membrane. Seems to be required for the assembly of the photosystem I complex. This is Photosystem I assembly protein Ycf4 from Cyanophora paradoxa.